Here is a 290-residue protein sequence, read N- to C-terminus: Sodium/potassium-transporting ATPase subunit beta-2 (290 aa).

The Cytoplasmic segment spans residues 1–39 (MVIQKEKKSCGQVVEEWKEFVWNPRTHQFMGRTGTSWAF). The chain crosses the membrane as a helical; Signal-anchor for type II membrane protein span at residues 40-67 (ILLFYLVFYGFLTAMFTLTMWVMLQTVS). Residues 68-290 (DHTPKYQDRL…VAFKLRINKT (223 aa)) lie on the Extracellular side of the membrane. N-linked (GlcNAc...) asparagine glycans are attached at residues asparagine 96 and asparagine 118. A disulfide bridge connects residues cysteine 129 and cysteine 150. Asparagine 153 and asparagine 159 each carry an N-linked (GlcNAc...) asparagine glycan. Cysteine 160 and cysteine 177 are joined by a disulfide. Asparagine 193, asparagine 197, and asparagine 238 each carry an N-linked (GlcNAc...) asparagine glycan. The interval 193 to 290 (NQSMNVTCAG…VAFKLRINKT (98 aa)) is immunoglobulin-like. An intrachain disulfide couples cysteine 200 to cysteine 261.

This sequence belongs to the X(+)/potassium ATPases subunit beta family. The sodium/potassium-transporting ATPase is composed of a catalytic alpha subunit, an auxiliary non-catalytic beta subunit and an additional regulatory subunit. Interacts with isoform 2 of BSG.

The protein resides in the cell membrane. This is the non-catalytic component of the active enzyme, which catalyzes the hydrolysis of ATP coupled with the exchange of Na(+) and K(+) ions across the plasma membrane. The exact function of the beta-2 subunit is not known. In terms of biological role, mediates cell adhesion of neurons and astrocytes, and promotes neurite outgrowth. The protein is Sodium/potassium-transporting ATPase subunit beta-2 (ATP1B2) of Homo sapiens (Human).